We begin with the raw amino-acid sequence, 343 residues long: Probable transposase for insertion sequence element (343 aa).

The protein belongs to the transposase mutator family.

Required for the transposition of the insertion element. This Corynebacterium diphtheriae protein is Probable transposase for insertion sequence element.